The sequence spans 376 residues: Cell adhesion molecule CEACAM18 (376 aa).

The N-terminal stretch at 1 to 30 (MDFSRPSFSPWRWLTLVASLLTCGICQASG) is a signal peptide. Topologically, residues 31-330 (QIFISPDSLL…PLPTVNRELY (300 aa)) are extracellular. N-linked (GlcNAc...) asparagine glycosylation is found at Asn-69, Asn-95, and Asn-110. The region spanning 229 to 314 (PDYVSLWTQP…TQLTFYRDVT (86 aa)) is the Ig-like C2-type domain. Cys-257 and Cys-298 form a disulfide bridge. Residues 331–351 (IPGPLVIFLILLTSLGGAFVC) form a helical membrane-spanning segment. The Cytoplasmic portion of the chain corresponds to 352 to 376 (RVLVYSLFQSCSRGKTCHKCPWQTN).

It belongs to the immunoglobulin superfamily. CEA family. In terms of tissue distribution, mostly expressed in the small and large intestine and at lower levels also in other organs.

It localises to the membrane. This chain is Cell adhesion molecule CEACAM18, found in Mus musculus (Mouse).